We begin with the raw amino-acid sequence, 517 residues long: Rop guanine nucleotide exchange factor 9 (517 aa).

Disordered regions lie at residues 16–76 (NLDR…SETE) and 428–517 (GEET…KDRH). Residues 39–63 (MPESQTQDSLGGSPVETSRPMTSRL) are compositionally biased toward polar residues. Positions 65–429 (SRRQDKQQSE…SLARKQCTGE (365 aa)) constitute a PRONE domain. Basic and acidic residues predominate over residues 66-76 (RRQDKQQSETE). The span at 440-452 (ETDSASAGSSNYS) shows a compositional bias: polar residues.

Interacts with ARAC11/ROP1 and ARAC10/ROP11. Interacts with PRK6. In terms of tissue distribution, expressed in pollen grains and pollen tubes.

It localises to the cell membrane. Guanine-nucleotide exchange factor (GEF) that acts as an activator of Rop (Rho of plants) GTPases by promoting the exchange of GDP for GTP. This chain is Rop guanine nucleotide exchange factor 9, found in Arabidopsis thaliana (Mouse-ear cress).